The chain runs to 296 residues: Putative mannose 6-phosphate receptor-like protein C530.09c (296 aa).

The signal sequence occupies residues 1–25 (MRLLTCLINVLAGLTLFSQFQRAFG). The Lumenal portion of the chain corresponds to 26 to 206 (LTITRRGFKV…TVKKDSTLNP (181 aa)). One can recognise an MRH domain in the interval 42-197 (PFCALHHPNT…EWKTIHACPT (156 aa)). A disulfide bond links cysteine 44 and cysteine 87. 5 N-linked (GlcNAc...) asparagine glycosylation sites follow: asparagine 64, asparagine 81, asparagine 93, asparagine 96, and asparagine 143. Cystine bridges form between cysteine 147/cysteine 183 and cysteine 163/cysteine 195. A helical transmembrane segment spans residues 207–227 (VSVFLLFCAIAFLAYFVGGFV). Topologically, residues 228–249 (YQRVVLNARGLRQIPNYEMWRS) are cytoplasmic. The helical transmembrane segment at 250–270 (LFGFISDIVIILYSSILSILP) threads the bilayer. The Lumenal segment spans residues 271–296 (SSITRMRGNRRNIDYVEDALIDDIDT).

The protein belongs to the MRL1/IGF2R family.

It localises to the golgi apparatus. Its subcellular location is the trans-Golgi network membrane. The protein localises to the endosome membrane. The sequence is that of Putative mannose 6-phosphate receptor-like protein C530.09c from Schizosaccharomyces pombe (strain 972 / ATCC 24843) (Fission yeast).